We begin with the raw amino-acid sequence, 147 residues long: Small ribosomal subunit protein uS13 (147 aa).

Residues 115-147 (SYKGRRHEAGLPVRGQRTKSTFRNSSSVGVKRS) are disordered. Residues 132–147 (TKSTFRNSSSVGVKRS) are compositionally biased toward polar residues.

The protein belongs to the universal ribosomal protein uS13 family. Part of the 30S ribosomal subunit. Forms a loose heterodimer with protein S19. Forms two bridges to the 50S subunit in the 70S ribosome.

Located at the top of the head of the 30S subunit, it contacts several helices of the 16S rRNA. In the 70S ribosome it contacts the 23S rRNA (bridge B1a) and protein L5 of the 50S subunit (bridge B1b), connecting the 2 subunits; these bridges are implicated in subunit movement. The polypeptide is Small ribosomal subunit protein uS13 (Methanobrevibacter smithii (strain ATCC 35061 / DSM 861 / OCM 144 / PS)).